Here is a 366-residue protein sequence, read N- to C-terminus: Ribosomal RNA large subunit methyltransferase M (366 aa).

S-adenosyl-L-methionine contacts are provided by residues Ser-188, 221-224, Asp-240, Asp-260, and Asp-277; that span reads CPGG. Catalysis depends on Lys-306, which acts as the Proton acceptor.

Belongs to the class I-like SAM-binding methyltransferase superfamily. RNA methyltransferase RlmE family. RlmM subfamily. As to quaternary structure, monomer.

Its subcellular location is the cytoplasm. The enzyme catalyses cytidine(2498) in 23S rRNA + S-adenosyl-L-methionine = 2'-O-methylcytidine(2498) in 23S rRNA + S-adenosyl-L-homocysteine + H(+). Its function is as follows. Catalyzes the 2'-O-methylation at nucleotide C2498 in 23S rRNA. The chain is Ribosomal RNA large subunit methyltransferase M from Citrobacter koseri (strain ATCC BAA-895 / CDC 4225-83 / SGSC4696).